The primary structure comprises 160 residues: Putative 4-hydroxy-4-methyl-2-oxoglutarate aldolase (160 aa).

Substrate-binding positions include G76–L79 and R98. D99 lines the a divalent metal cation pocket.

It belongs to the class II aldolase/RraA-like family. As to quaternary structure, homotrimer. A divalent metal cation is required as a cofactor.

The enzyme catalyses 4-hydroxy-4-methyl-2-oxoglutarate = 2 pyruvate. The catalysed reaction is oxaloacetate + H(+) = pyruvate + CO2. In terms of biological role, catalyzes the aldol cleavage of 4-hydroxy-4-methyl-2-oxoglutarate (HMG) into 2 molecules of pyruvate. Also contains a secondary oxaloacetate (OAA) decarboxylase activity due to the common pyruvate enolate transition state formed following C-C bond cleavage in the retro-aldol and decarboxylation reactions. In Deinococcus radiodurans (strain ATCC 13939 / DSM 20539 / JCM 16871 / CCUG 27074 / LMG 4051 / NBRC 15346 / NCIMB 9279 / VKM B-1422 / R1), this protein is Putative 4-hydroxy-4-methyl-2-oxoglutarate aldolase.